A 309-amino-acid polypeptide reads, in one-letter code: tRNA-cytidine(32) 2-sulfurtransferase (309 aa).

Positions 45-50 (SGGKDS) match the PP-loop motif motif. [4Fe-4S] cluster-binding residues include cysteine 120, cysteine 123, and cysteine 211.

It belongs to the TtcA family. As to quaternary structure, homodimer. Mg(2+) serves as cofactor. The cofactor is [4Fe-4S] cluster.

The protein resides in the cytoplasm. The enzyme catalyses cytidine(32) in tRNA + S-sulfanyl-L-cysteinyl-[cysteine desulfurase] + AH2 + ATP = 2-thiocytidine(32) in tRNA + L-cysteinyl-[cysteine desulfurase] + A + AMP + diphosphate + H(+). The protein operates within tRNA modification. Its function is as follows. Catalyzes the ATP-dependent 2-thiolation of cytidine in position 32 of tRNA, to form 2-thiocytidine (s(2)C32). The sulfur atoms are provided by the cysteine/cysteine desulfurase (IscS) system. The polypeptide is tRNA-cytidine(32) 2-sulfurtransferase (Psychromonas ingrahamii (strain DSM 17664 / CCUG 51855 / 37)).